The following is a 168-amino-acid chain: Bcl2-associated agonist of cell death (168 aa).

N-acetylmethionine is present on M1. Positions 1–105 are disordered; sequence MFQIPEFEPS…RSRSAPPNLW (105 aa). S25 carries the phosphoserine modification. The span at 49-60 shows a compositional bias: polar residues; sequence SHQQEQPTSSSH. Phosphoserine occurs at positions 75 and 91. An asymmetric dimethylarginine; by PRMT1 mark is found at R94 and R96. S97 bears the Phosphoserine mark. Position 99 is a phosphoserine; by PKA, PKB, PAK1, RPS6KA1, RPS6KB1 and PKC/PRKCQ (S99). At S99 the chain carries Phosphoserine; by PKB/AKT1. The short motif at 110 to 124 is the BH3 element; that stretch reads YGRELRRMSDEFVDS. A phosphoserine mark is found at S118 and S134. The tract at residues 125–145 is disordered; sequence FKKGLPRPKSAGTATQMRQSS. The segment covering 136-145 has biased composition (polar residues); the sequence is GTATQMRQSS. At R161 the chain carries Omega-N-methylarginine.

The protein belongs to the Bcl-2 family. Forms heterodimers with the anti-apoptotic proteins, Bcl-X(L), Bcl-2 and Bcl-W. Also binds protein S100A10. The Ser-75/Ser-99 phosphorylated form binds 14-3-3 proteins. Interacts with AKT1 and PIM3. Interacts (via BH3 domain) with NOL3 (via CARD domain); preventing the association of BAD with BCL2. Interacts with HIF3A (via C-terminus domain); the interaction reduces the binding between BAD and BAX. Interacts with GIMAP3/IAN4 and GIMAP5/IAN5. In terms of processing, phosphorylated on one or more of Ser-75, Ser-99, Ser-118 and Ser-134 in response to survival stimuli, which blocks its pro-apoptotic activity. Phosphorylation on Ser-99 or Ser-75 promotes heterodimerization with 14-3-3 proteins. This interaction then facilitates the phosphorylation at Ser-118, a site within the BH3 motif, leading to the release of Bcl-X(L) and the promotion of cell survival. Ser-99 is the major site of AKT/PKB phosphorylation, Ser-118 the major site of protein kinase A (CAPK) phosphorylation. Phosphorylation at Ser-99 by PKB/AKT1 is almost completely blocked by the apoptotic C-terminus cleavage product of PKN2 generated by caspases-3 activity during apoptosis. Post-translationally, methylation at Arg-94 and Arg-96 by PRMT1 inhibits Akt-mediated phosphorylation at Ser-99. Expressed in a wide variety of tissues.

The protein localises to the mitochondrion outer membrane. Its subcellular location is the cytoplasm. Promotes cell death. Successfully competes for the binding to Bcl-X(L), Bcl-2 and Bcl-W, thereby affecting the level of heterodimerization of these proteins with BAX. Can reverse the death repressor activity of Bcl-X(L), but not that of Bcl-2. Appears to act as a link between growth factor receptor signaling and the apoptotic pathways. This is Bcl2-associated agonist of cell death (BAD) from Homo sapiens (Human).